Here is a 1151-residue protein sequence, read N- to C-terminus: Syntaxin-binding protein 5 (1151 aa).

Residues 14–34 (TAGSSSASQQQQQQHPPGNRE) are disordered. The span at 17–27 (SSSASQQQQQQ) shows a compositional bias: low complexity. 10 WD repeats span residues 61–94 (SALAFDPVQKILAVGTQTGALRLFGRPGVECYCQ), 101–140 (VIQLQFLINEGALVSALADDTLHLWNLRQKRPAILHSLKF), 145–181 (VTFCHLPFQSKWLYVGTERGNIHIVNVESFTLSGYVI), 200–234 (HISDNPMDEGKLLIGFESGTVVLWDLKSKKADYRY), 240–272 (IHSVAWHHEGKQFICSHSDGTLTIWNVRSPAKP), 294–336 (PILK…KSTA), 344–378 (IVDFLTLCETPYPNDFQEPYAVVVLLEKDLVLIDL), 400–477 (TCCE…YKLK), 505–619 (QIIS…ELVI), and 633–695 (TSLA…SGAG). Disordered stretches follow at residues 555-595 (ETPE…GLRD) and 674-729 (SNDP…EQKM). The residue at position 692 (serine 692) is a Phosphoserine. Residues 712-721 (SPTSGSSSPH) are compositionally biased toward low complexity. At serine 723 the chain carries Phosphoserine; by PKA. A Phosphoserine modification is found at serine 759. Threonine 762 is subject to Phosphothreonine. At serine 782 the chain carries Phosphoserine. Residue threonine 784 is modified to Phosphothreonine. Serine 785 carries the phosphoserine modification. WD repeat units lie at residues 794 to 851 (ISAL…SGTI), 860 to 934 (RMAF…QNCA), 939 to 983 (ITET…LDVY), and 997 to 1020 (CFTNNGQALYLVSPTEIQRLTYSQ). The segment covering 881 to 892 (HNVPEEKDEKEK) has biased composition (basic and acidic residues). Positions 881 to 906 (HNVPEEKDEKEKLKKRRPVSVSPSSS) are disordered. Serine 900 and serine 902 each carry phosphoserine. Position 1039 is a phosphothreonine (threonine 1039). Residues serine 1058 and serine 1131 each carry the phosphoserine modification. Residues 1086 to 1146 (GIEGVKGAAS…HEIMLKYKDK (61 aa)) form the v-SNARE coiled-coil homology domain.

Belongs to the WD repeat L(2)GL family. As to quaternary structure, interacts with STX1A and STX1B via its v-SNARE homology domain. Part of a complex that contains STX1, STXBP5, SNAP25 and SYT1. Part of a complex that contains STXBP5, STX4A and SNAP23.

It is found in the cytoplasm. It localises to the cell membrane. Its subcellular location is the cytoplasmic vesicle membrane. The protein localises to the cytoplasmic vesicle. The protein resides in the secretory vesicle. It is found in the synaptic vesicle. It localises to the synapse. In terms of biological role, plays a regulatory role in calcium-dependent exocytosis and neurotransmitter release. Inhibits membrane fusion between transport vesicles and the plasma membrane. May modulate the assembly of trans-SNARE complexes between transport vesicles and the plasma membrane. Inhibits translocation of GLUT4 from intracellular vesicles to the plasma membrane. Competes with STXBP1 for STX1 binding. The sequence is that of Syntaxin-binding protein 5 (STXBP5) from Homo sapiens (Human).